Reading from the N-terminus, the 156-residue chain is Protein-export protein SecB (156 aa).

Belongs to the SecB family. As to quaternary structure, homotetramer, a dimer of dimers. One homotetramer interacts with 1 SecA dimer.

Its subcellular location is the cytoplasm. Functionally, one of the proteins required for the normal export of preproteins out of the cell cytoplasm. It is a molecular chaperone that binds to a subset of precursor proteins, maintaining them in a translocation-competent state. It also specifically binds to its receptor SecA. The chain is Protein-export protein SecB from Aeromonas hydrophila subsp. hydrophila (strain ATCC 7966 / DSM 30187 / BCRC 13018 / CCUG 14551 / JCM 1027 / KCTC 2358 / NCIMB 9240 / NCTC 8049).